Here is a 380-residue protein sequence, read N- to C-terminus: Cell division protein FtsZ 2 (380 aa).

Residues 47-51 (GAGNN), 134-136 (GTG), glutamate 165, arginine 168, and aspartate 211 each bind GTP.

The protein belongs to the FtsZ family. In terms of assembly, homodimer. Polymerizes to form a dynamic ring structure in a strictly GTP-dependent manner. Interacts directly with several other division proteins.

The protein localises to the cytoplasm. Functionally, essential cell division protein that forms a contractile ring structure (Z ring) at the future cell division site. The regulation of the ring assembly controls the timing and the location of cell division. One of the functions of the FtsZ ring is to recruit other cell division proteins to the septum to produce a new cell wall between the dividing cells. Binds GTP and shows GTPase activity. The protein is Cell division protein FtsZ 2 of Methanocaldococcus jannaschii (strain ATCC 43067 / DSM 2661 / JAL-1 / JCM 10045 / NBRC 100440) (Methanococcus jannaschii).